We begin with the raw amino-acid sequence, 361 residues long: MLVWLAEYLHQYQSVFNVFSYLTVRAILALFTALLLSLWIGPKVIRRLQILKFGQEIRNDGPDSHLSKKGTPTMGGIMILFAIGVSTLLWANLANPYVWFCLFVLFGYGAVGFVDDYRKITRKNTAGLVARWKYFWLSVIALISAFGMYAIGKDTDATRLVVPFFKDVMPQLGLFYIVLAYFVIVGTGNAVNLTDGLDGLAIMPTVFVAAAFALIAWATGNIEWSKYLYIPYIKHTSELVIFCTAIVGAGLGFLWFNTYPAQLFMGDVGSLALGGVLGTIAVLVRQEFLLVIMGGVFVVETLSVILQVGSYKLRNGKRIFRMAPIHHHYELKGWPEPRVIIRFWIISLMLVLLGLITLKLR.

Helical transmembrane passes span 21 to 41 (YLTVRAILALFTALLLSLWIG), 74 to 94 (MGGIMILFAIGVSTLLWANLA), 97 to 117 (YVWFCLFVLFGYGAVGFVDDY), 132 to 152 (WKYFWLSVIALISAFGMYAIG), 168 to 188 (VMPQLGLFYIVLAYFVIVGTG), 199 to 219 (GLAIMPTVFVAAAFALIAWAT), 239 to 259 (LVIFCTAIVGAGLGFLWFNTY), 264 to 284 (FMGDVGSLALGGVLGTIAVLV), 288 to 308 (FLLVIMGGVFVVETLSVILQV), and 339 to 359 (VIIRFWIISLMLVLLGLITLK).

This sequence belongs to the glycosyltransferase 4 family. MraY subfamily. Mg(2+) is required as a cofactor.

The protein resides in the cell inner membrane. It catalyses the reaction UDP-N-acetyl-alpha-D-muramoyl-L-alanyl-gamma-D-glutamyl-meso-2,6-diaminopimeloyl-D-alanyl-D-alanine + di-trans,octa-cis-undecaprenyl phosphate = di-trans,octa-cis-undecaprenyl diphospho-N-acetyl-alpha-D-muramoyl-L-alanyl-D-glutamyl-meso-2,6-diaminopimeloyl-D-alanyl-D-alanine + UMP. It participates in cell wall biogenesis; peptidoglycan biosynthesis. In terms of biological role, catalyzes the initial step of the lipid cycle reactions in the biosynthesis of the cell wall peptidoglycan: transfers peptidoglycan precursor phospho-MurNAc-pentapeptide from UDP-MurNAc-pentapeptide onto the lipid carrier undecaprenyl phosphate, yielding undecaprenyl-pyrophosphoryl-MurNAc-pentapeptide, known as lipid I. The protein is Phospho-N-acetylmuramoyl-pentapeptide-transferase of Histophilus somni (strain 129Pt) (Haemophilus somnus).